A 126-amino-acid polypeptide reads, in one-letter code: Fatty acid-binding protein, liver (126 aa).

Residues 54–56 (TPN), 99–101 (HEQ), and R121 contribute to the cholate site.

Belongs to the calycin superfamily. Fatty-acid binding protein (FABP) family.

The protein resides in the cytoplasm. In terms of biological role, FABPs are thought to play a role in the intracellular transport of long-chain fatty acids and their acyl-CoA esters. The polypeptide is Fatty acid-binding protein, liver (Anolis pulchellus (Common grass anole)).